The following is a 268-amino-acid chain: MSATRIGVVGAGGRMGRMLIEATLKDDRLVLGAAFDVPGSPALGKTAGELVGLPCDVVVTDDVAAGLKNIDCLIDFTRPQGTLVHLELCRKAGVGMVIGTTGFEADGKAVIAEAAKDIPVVFAPNMAVGVNVAFKLLETAARILNQGYDIEIVEAHHRLKVDAPSGTALRMGEVVASALGRDLEECAVYGREGVTGERDPSTIGFATVRGGDIVGDHTVMFCGIGERVEITHKASSRMPYALGSLRAARFMAGHKSGLFDMQDVLGLR.

NAD(+) contacts are provided by residues 10–15 (GAGGRM), aspartate 36, 99–101 (GTT), and 123–126 (APNM). The Proton donor/acceptor role is filled by histidine 156. (S)-2,3,4,5-tetrahydrodipicolinate is bound at residue histidine 157. The active-site Proton donor is the lysine 160. 166–167 (GT) serves as a coordination point for (S)-2,3,4,5-tetrahydrodipicolinate.

The protein belongs to the DapB family.

The protein resides in the cytoplasm. The catalysed reaction is (S)-2,3,4,5-tetrahydrodipicolinate + NAD(+) + H2O = (2S,4S)-4-hydroxy-2,3,4,5-tetrahydrodipicolinate + NADH + H(+). It carries out the reaction (S)-2,3,4,5-tetrahydrodipicolinate + NADP(+) + H2O = (2S,4S)-4-hydroxy-2,3,4,5-tetrahydrodipicolinate + NADPH + H(+). It participates in amino-acid biosynthesis; L-lysine biosynthesis via DAP pathway; (S)-tetrahydrodipicolinate from L-aspartate: step 4/4. In terms of biological role, catalyzes the conversion of 4-hydroxy-tetrahydrodipicolinate (HTPA) to tetrahydrodipicolinate. This is 4-hydroxy-tetrahydrodipicolinate reductase from Dechloromonas aromatica (strain RCB).